Reading from the N-terminus, the 748-residue chain is Peroxisomal membrane protein PEX14 (748 aa).

Disordered regions lie at residues 1-138 (MDND…LSPS) and 190-228 (GNIN…NNNN). Topologically, residues 1-277 (MDNDDINNNN…IAQLMMNNNR (277 aa)) are peroxisomal. Positions 7-30 (NNNNNNNNNNNNNNNSQELDQQEQ) are enriched in low complexity. The stretch at 8-60 (NNNNNNNNNNNNNNSQELDQQEQTQEEITKQRIQKRKEEAKRIMEERKKREQQ) forms a coiled coil. The segment covering 43–59 (RKEEAKRIMEERKKREQ) has biased composition (basic and acidic residues). Residues 86 to 104 (PQRQQQYDDNDEPPQQQQY) are compositionally biased toward polar residues. Low complexity-rich tracts occupy residues 122-131 (TTSSTASAAT), 190-209 (GNIN…NSIS), and 218-228 (NNNNNSSNNNN). Positions 241 to 277 (QQHQQQQQMALTQIQSYQKRLEADDQRIAQLMMNNNR) form a coiled coil. Residues 278–300 (FSWNSFLFSVTAIVGAASGLAYL) form a helical membrane-spanning segment. The Cytoplasmic segment spans residues 301–748 (TSNYIIPFLN…INNTDSSVEK (448 aa)). Positions 316-413 (KDASANMDKK…IGNKENSNNS (98 aa)) form a coiled coil. Disordered regions lie at residues 406-673 (NKEN…ETPY) and 685-748 (KQGK…SVEK). Composition is skewed to low complexity over residues 409–424 (NSNN…NNNN) and 445–476 (STNN…PGSN). A compositionally biased stretch (polar residues) spans 510-527 (SWQQKSSNPPSDLSNAND). Composition is skewed to low complexity over residues 528–542 (KSSP…PTKP) and 569–611 (TTTT…NNNN). Over residues 612–627 (TTIASTSNESNNSKVE) the composition is skewed to polar residues. Low complexity predominate over residues 628–661 (TTSNDSDKSTSPSSSSNNTTSTTATTTTITSAST). The span at 710 to 723 (SAKERPKKPWERDT) shows a compositional bias: basic and acidic residues. The segment covering 724–748 (LTSVTNNLSVEETQTINNTDSSVEK) has biased composition (polar residues).

The protein belongs to the peroxin-14 family. In terms of assembly, interacts with PEX13; forming the PEX13-PEX14 docking complex. Interacts with PEX5 (via WxxxF/Y motifs).

Its subcellular location is the peroxisome membrane. Its function is as follows. Component of the PEX13-PEX14 docking complex, a translocon channel that specifically mediates the import of peroxisomal cargo proteins bound to PEX5 receptor. The PEX13-PEX14 docking complex forms a large import pore which can be opened to a diameter of about 9 nm. Mechanistically, PEX5 receptor along with cargo proteins associates with the PEX14 subunit of the PEX13-PEX14 docking complex in the cytosol, leading to the insertion of the receptor into the organelle membrane with the concomitant translocation of the cargo into the peroxisome matrix. The sequence is that of Peroxisomal membrane protein PEX14 (pex14) from Dictyostelium discoideum (Social amoeba).